The primary structure comprises 260 residues: Ditrans,polycis-undecaprenyl-diphosphate synthase ((2E,6E)-farnesyl-diphosphate specific) (260 aa).

Aspartate 20 is an active-site residue. Aspartate 20 provides a ligand contact to Mg(2+). Residues 21–24 (GNGR), tryptophan 25, arginine 33, histidine 37, and 65–67 (SSE) contribute to the substrate site. Catalysis depends on asparagine 68, which acts as the Proton acceptor. Tryptophan 69, arginine 71, and arginine 188 together coordinate substrate. Histidine 193 contributes to the Mg(2+) binding site. Residue 194–196 (RIS) participates in substrate binding. A Mg(2+)-binding site is contributed by glutamate 207.

The protein belongs to the UPP synthase family. Homodimer. Mg(2+) is required as a cofactor.

The enzyme catalyses 8 isopentenyl diphosphate + (2E,6E)-farnesyl diphosphate = di-trans,octa-cis-undecaprenyl diphosphate + 8 diphosphate. In terms of biological role, catalyzes the sequential condensation of isopentenyl diphosphate (IPP) with (2E,6E)-farnesyl diphosphate (E,E-FPP) to yield (2Z,6Z,10Z,14Z,18Z,22Z,26Z,30Z,34E,38E)-undecaprenyl diphosphate (di-trans,octa-cis-UPP). UPP is the precursor of glycosyl carrier lipid in the biosynthesis of bacterial cell wall polysaccharide components such as peptidoglycan and lipopolysaccharide. This Wigglesworthia glossinidia brevipalpis protein is Ditrans,polycis-undecaprenyl-diphosphate synthase ((2E,6E)-farnesyl-diphosphate specific).